A 288-amino-acid chain; its full sequence is Chitinase 5 (288 aa).

The signal sequence occupies residues 1 to 29 (MANSPTPTMLAFLALGLALLLSATGQASA). In terms of domain architecture, Chitin-binding type-1 spans 30–64 (QNCGCQSNMCCSKWGYCGTGKDYCGDGCRSGPCYG). 7 disulfide bridges follow: Cys-32/Cys-40, Cys-34/Cys-46, Cys-39/Cys-53, Cys-57/Cys-62, Cys-107/Cys-156, Cys-169/Cys-178, and Cys-256/Cys-288. Glu-151 functions as the Proton donor in the catalytic mechanism.

This sequence belongs to the glycosyl hydrolase 19 family. Chitinase class IV subfamily. As to expression, expressed in sheaths and meristems and at lower levels in roots and leaves.

It carries out the reaction Random endo-hydrolysis of N-acetyl-beta-D-glucosaminide (1-&gt;4)-beta-linkages in chitin and chitodextrins.. In terms of biological role, may function in reproductive organs during embryogenesis and seed maturation. This chain is Chitinase 5 (Cht5), found in Oryza sativa subsp. japonica (Rice).